A 1159-amino-acid polypeptide reads, in one-letter code: WASH complex subunit 5 (1159 aa).

Belongs to the strumpellin family. As to quaternary structure, component of the WASH core complex also described as WASH regulatory complex (SHRC) composed of WASH (WASHC1, WASH2P or WASH3P), WASHC2 (WASHC2A or WASHC2C), WASHC3, WASHC4 and WASHC5. The WASH core complex associates via WASHC2 with the F-actin-capping protein dimer (formed by CAPZA1, CAPZA2 or CAPZA3 and CAPZB) in a transient or substoichiometric manner which was initially described as WASH complex. Interacts with VCP, PI4K2A.

It is found in the cytoplasm. It localises to the cytosol. The protein resides in the endoplasmic reticulum. The protein localises to the early endosome. Functionally, acts as a component of the WASH core complex that functions as a nucleation-promoting factor (NPF) at the surface of endosomes, where it recruits and activates the Arp2/3 complex to induce actin polymerization, playing a key role in the fission of tubules that serve as transport intermediates during endosome sorting. May be involved in axonal outgrowth. Involved in cellular localization of ADRB2. Involved in cellular trafficking of BLOC-1 complex cargos such as ATP7A and VAMP7. Involved in cytokinesis and following polar body extrusion during oocyte meiotic maturation. This is WASH complex subunit 5 from Mus musculus (Mouse).